Consider the following 294-residue polypeptide: MTENNIDRISNIIRTQDILRRHDFNFKKKFGQNFLTDHNILTKITQTAELSKEVNVIEIGPGIGSLTQYLLEEAAEVMAFEIDKSLIPILEETMAPYDNFTLVSADILKVDLLSEIQKFKNPNLPIKVVANLPYYITTPILMHLIESKIPFSEFVVMMQKEVADRIAASPKTKAYGSLSIAVQYYMEASVAFIVPRTVFIPAPNVDSAILKMVRREAPLVEVEDEEWFFKTMHSSFVHRRKTLMNNLQAAFGKESKPEIEKLLAQAEISPTIRGEALSIEEFAKLADALLPLKK.

S-adenosyl-L-methionine-binding residues include Asn33, Leu35, Gly60, Glu81, Asp106, and Asn131.

This sequence belongs to the class I-like SAM-binding methyltransferase superfamily. rRNA adenine N(6)-methyltransferase family. RsmA subfamily.

It localises to the cytoplasm. It catalyses the reaction adenosine(1518)/adenosine(1519) in 16S rRNA + 4 S-adenosyl-L-methionine = N(6)-dimethyladenosine(1518)/N(6)-dimethyladenosine(1519) in 16S rRNA + 4 S-adenosyl-L-homocysteine + 4 H(+). Its function is as follows. Specifically dimethylates two adjacent adenosines (A1518 and A1519) in the loop of a conserved hairpin near the 3'-end of 16S rRNA in the 30S particle. May play a critical role in biogenesis of 30S subunits. In Lactococcus lactis subsp. lactis (strain IL1403) (Streptococcus lactis), this protein is Ribosomal RNA small subunit methyltransferase A.